The primary structure comprises 141 residues: Protein Turandot Z (141 aa).

The signal sequence occupies residues 1–23 (MYFAIRLSFVLAVLFCLTGNGNA).

The protein belongs to the Turandot family.

The protein localises to the secreted. Functionally, a humoral factor that may play a role in stress tolerance. The sequence is that of Protein Turandot Z from Drosophila yakuba (Fruit fly).